The following is a 200-amino-acid chain: Pyridoxine/pyridoxamine 5'-phosphate oxidase (200 aa).

FMN contacts are provided by residues 49-54 (RMLLLK), 64-65 (YT), arginine 70, lysine 71, and glutamine 93. Lysine 54 is a binding site for substrate. Tyrosine 111, arginine 115, and serine 119 together coordinate substrate. FMN is bound by residues 128–129 (QS) and tryptophan 173. Residue 179–181 (RLH) coordinates substrate. Arginine 183 provides a ligand contact to FMN.

It belongs to the pyridoxamine 5'-phosphate oxidase family. As to quaternary structure, homodimer. The cofactor is FMN.

It carries out the reaction pyridoxamine 5'-phosphate + O2 + H2O = pyridoxal 5'-phosphate + H2O2 + NH4(+). It catalyses the reaction pyridoxine 5'-phosphate + O2 = pyridoxal 5'-phosphate + H2O2. The protein operates within cofactor metabolism; pyridoxal 5'-phosphate salvage; pyridoxal 5'-phosphate from pyridoxamine 5'-phosphate: step 1/1. It functions in the pathway cofactor metabolism; pyridoxal 5'-phosphate salvage; pyridoxal 5'-phosphate from pyridoxine 5'-phosphate: step 1/1. In terms of biological role, catalyzes the oxidation of either pyridoxine 5'-phosphate (PNP) or pyridoxamine 5'-phosphate (PMP) into pyridoxal 5'-phosphate (PLP). This is Pyridoxine/pyridoxamine 5'-phosphate oxidase from Gluconobacter oxydans (strain 621H) (Gluconobacter suboxydans).